Consider the following 441-residue polypeptide: Arginine biosynthesis bifunctional protein ArgJ, mitochondrial (441 aa).

Residues 1–8 (MRISSTLL) constitute a mitochondrion transit peptide. Substrate is bound by residues T177, K204, T215, E301, N436, and S441. Residue T215 is the Nucleophile of the active site.

The protein belongs to the ArgJ family. As to quaternary structure, heterodimer of an alpha and a beta chain. In terms of processing, the alpha and beta chains are autoproteolytically processed from a single precursor protein within the mitochondrion.

The protein resides in the mitochondrion matrix. The catalysed reaction is N(2)-acetyl-L-ornithine + L-glutamate = N-acetyl-L-glutamate + L-ornithine. The enzyme catalyses L-glutamate + acetyl-CoA = N-acetyl-L-glutamate + CoA + H(+). It functions in the pathway amino-acid biosynthesis; L-arginine biosynthesis; L-ornithine and N-acetyl-L-glutamate from L-glutamate and N(2)-acetyl-L-ornithine (cyclic): step 1/1. The protein operates within amino-acid biosynthesis; L-arginine biosynthesis; N(2)-acetyl-L-ornithine from L-glutamate: step 1/4. In terms of biological role, catalyzes two activities which are involved in the cyclic version of arginine biosynthesis: the synthesis of acetylglutamate from glutamate and acetyl-CoA, and of ornithine by transacetylation between acetylornithine and glutamate. This Saccharomyces cerevisiae (strain Lalvin EC1118 / Prise de mousse) (Baker's yeast) protein is Arginine biosynthesis bifunctional protein ArgJ, mitochondrial.